The primary structure comprises 634 residues: Kinesin-like protein KIF22 (634 aa).

Positions 19 to 345 (RVRVAVRLRP…LNFAAKSKQI (327 aa)) constitute a Kinesin motor domain. An ATP-binding site is contributed by 103–110 (GPTGAGKT). The interval 357-406 (APTIAPGKRTREEQEAGGSGEPQNKRSKEGKKAEHSPSPPLHPQSSPDSS) is disordered. The span at 379–391 (QNKRSKEGKKAEH) shows a compositional bias: basic and acidic residues. Residues 421 to 471 (SAERERLNLLKTVAQSRKEIQMLKEKQKELEDKANMFNKQKETTEKESKDA) adopt a coiled-coil conformation.

It belongs to the TRAFAC class myosin-kinesin ATPase superfamily. Kinesin family. In terms of processing, ubiquitinated, leading to its subsequent proteasomal degradation.

It is found in the nucleus. The protein resides in the cytoplasm. It localises to the cytoskeleton. Functionally, kinesin family member that is involved in spindle formation and the movements of chromosomes during mitosis and meiosis. Binds to microtubules and to DNA. The polypeptide is Kinesin-like protein KIF22 (kif22) (Danio rerio (Zebrafish)).